A 309-amino-acid polypeptide reads, in one-letter code: uncharacterized protein (309 aa).

Pro residues-rich tracts occupy residues 1–17 (MTSRAPSPPTPPCPSPP) and 24–51 (SPVPTATPASPPLKPLSNPLPPPPPTPR). Disordered regions lie at residues 1 to 174 (MTSR…PPGV) and 216 to 240 (PPDLPSPPLSPPLSPPLSPISPLHA). The span at 67–83 (LRSSPSSALNASRGAPS) shows a compositional bias: low complexity. Pro residues predominate over residues 84-112 (TSPPPSSSPPSSPASTPPSRTPSPTPTAP). 2 stretches are compositionally biased toward low complexity: residues 113–125 (ASPVASTAMTPAS) and 135–144 (APSSSAALSS). The span at 160–174 (PPPPLPPPLQPPPGV) shows a compositional bias: pro residues. A helical membrane pass occupies residues 278 to 298 (LFLLFTLLSIHFSPFPIFILL).

Its subcellular location is the host membrane. This is an uncharacterized protein from Vitis vinifera (Grape).